The following is a 497-amino-acid chain: Probable cytosol aminopeptidase (497 aa).

The Mn(2+) site is built by Lys-263 and Asp-268. Lys-275 is an active-site residue. 3 residues coordinate Mn(2+): Asp-286, Asp-345, and Glu-347. Arg-349 is an active-site residue.

The protein belongs to the peptidase M17 family. Requires Mn(2+) as cofactor.

The protein localises to the cytoplasm. The catalysed reaction is Release of an N-terminal amino acid, Xaa-|-Yaa-, in which Xaa is preferably Leu, but may be other amino acids including Pro although not Arg or Lys, and Yaa may be Pro. Amino acid amides and methyl esters are also readily hydrolyzed, but rates on arylamides are exceedingly low.. It carries out the reaction Release of an N-terminal amino acid, preferentially leucine, but not glutamic or aspartic acids.. Its function is as follows. Presumably involved in the processing and regular turnover of intracellular proteins. Catalyzes the removal of unsubstituted N-terminal amino acids from various peptides. This is Probable cytosol aminopeptidase from Sinorhizobium medicae (strain WSM419) (Ensifer medicae).